Here is a 399-residue protein sequence, read N- to C-terminus: Serine palmitoyltransferase (399 aa).

Pyridoxal 5'-phosphate is bound by residues 113 to 114 (GF), H213, T241, and S243. Residue K244 is modified to N6-(pyridoxal phosphate)lysine.

The protein belongs to the class-II pyridoxal-phosphate-dependent aminotransferase family. As to quaternary structure, homodimer. It depends on pyridoxal 5'-phosphate as a cofactor.

The protein resides in the cytoplasm. It localises to the cell inner membrane. It catalyses the reaction L-serine + hexadecanoyl-CoA + H(+) = 3-oxosphinganine + CO2 + CoA. It participates in lipid metabolism; sphingolipid metabolism. Catalyzes the condensation of L-serine with palmitoyl-CoA (hexadecanoyl-CoA) to produce 3-oxosphinganine. Exhibits a broad substrate specificity concerning the chain length and the degree of unsaturation of acyl-CoA. The sequence is that of Serine palmitoyltransferase from Sphingobacterium multivorum.